The sequence spans 199 residues: Photosystem I reaction center subunit XI (199 aa).

The next 2 helical transmembrane spans lie at 108-128 (LTAG…LFVL) and 165-185 (FWLG…TLHL).

The protein belongs to the PsaL family.

The protein resides in the cellular thylakoid membrane. This chain is Photosystem I reaction center subunit XI, found in Prochlorococcus marinus (strain MIT 9301).